A 311-amino-acid chain; its full sequence is Coproporphyrin III ferrochelatase 1 (311 aa).

Fe-coproporphyrin III-binding positions include tyrosine 12, arginine 29, 45-46, serine 53, and tyrosine 124; that span reads RY. Residues histidine 182 and glutamate 263 each contribute to the Fe(2+) site.

This sequence belongs to the ferrochelatase family.

It localises to the cytoplasm. It carries out the reaction Fe-coproporphyrin III + 2 H(+) = coproporphyrin III + Fe(2+). The protein operates within porphyrin-containing compound metabolism; protoheme biosynthesis. Involved in coproporphyrin-dependent heme b biosynthesis. Catalyzes the insertion of ferrous iron into coproporphyrin III to form Fe-coproporphyrin III. This chain is Coproporphyrin III ferrochelatase 1, found in Bacillus anthracis.